A 218-amino-acid chain; its full sequence is uncharacterized protein (218 aa).

The tract at residues 1 to 67 (MARITNMGKR…KKKRSEYRRL (67 aa)) is disordered. A compositionally biased stretch (low complexity) spans 29–39 (NSSNTNEESSS). Over residues 40–49 (QDNMKASFGS) the composition is skewed to polar residues. The segment covering 58 to 67 (KKKRSEYRRL) has biased composition (basic residues). 3 CCHC-type zinc fingers span residues 77–94 (KFCF…DCPE), 100–117 (SICF…ACSK), and 124–141 (AKCF…QCEQ). The segment at 152–168 (CCKFCSSVHHLAKDCDQ) adopts a CCHC-type 4; atypical zinc-finger fold.

This is an uncharacterized protein from Schizosaccharomyces pombe (strain 972 / ATCC 24843) (Fission yeast).